Here is a 467-residue protein sequence, read N- to C-terminus: Probable glutamate decarboxylase gamma (467 aa).

K278 is subject to N6-(pyridoxal phosphate)lysine.

This sequence belongs to the group II decarboxylase family. Pyridoxal 5'-phosphate is required as a cofactor.

It catalyses the reaction L-glutamate + H(+) = 4-aminobutanoate + CO2. The chain is Probable glutamate decarboxylase gamma from Listeria monocytogenes serovar 1/2a (strain ATCC BAA-679 / EGD-e).